The sequence spans 142 residues: Large ribosomal subunit protein uL13 (142 aa).

This sequence belongs to the universal ribosomal protein uL13 family. As to quaternary structure, part of the 50S ribosomal subunit.

In terms of biological role, this protein is one of the early assembly proteins of the 50S ribosomal subunit, although it is not seen to bind rRNA by itself. It is important during the early stages of 50S assembly. This Xylella fastidiosa (strain 9a5c) protein is Large ribosomal subunit protein uL13.